The chain runs to 172 residues: Small integral membrane protein 23 (172 aa).

Topologically, residues 1–36 (MATQQVDSRRQVAAEQVAAQLLERRRGSHCDDEKQT) are cytoplasmic. The helical; Signal-anchor for type II membrane protein transmembrane segment at 37–53 (LLALLILVLYLSTEIWG) threads the bilayer. The Extracellular segment spans residues 54–172 (SSWEVSERIR…LEISLSGAEL (119 aa)). Positions 96–128 (LKEKLHVFSEKLEEEVQQLEQLAWDLELWLDAL) form a coiled coil.

The protein resides in the cell membrane. The polypeptide is Small integral membrane protein 23 (SMIM23) (Homo sapiens (Human)).